The primary structure comprises 560 residues: Trans-activating transcriptional regulatory protein (560 aa).

The segment at 106 to 133 (DSMKRKASELDSDSDSGESSKGKKRVIK) is disordered.

Belongs to the nucleopolyhedrovirus IE-1 protein family.

Functionally, regulatory transcriptional protein, which trans-activates gene expression from early baculovirus promoters. Can also trans-activate its own promoter, suggesting that it is autoregulated during normal infection of insect cells. In Choristoneura fumiferana nuclear polyhedrosis virus (CfMNPV), this protein is Trans-activating transcriptional regulatory protein (IE1).